Here is a 468-residue protein sequence, read N- to C-terminus: Nuclear distribution protein PAC1-2 (468 aa).

One can recognise a LisH domain in the interval Gln13 to Glu45. Positions Ser66 to Gly92 form a coiled coil. WD repeat units follow at residues Gly118–Lys159, His161–Arg201, Gly205–Thr251, Gly254–Arg293, Gly298–Leu358, Gly360–Gln399, Met404–Gly429, and Asp430–Asn468.

Belongs to the WD repeat LIS1/nudF family. In terms of assembly, self-associates. Interacts with NDL1 and dynein.

It is found in the cytoplasm. The protein resides in the cytoskeleton. It localises to the spindle pole. Its function is as follows. Positively regulates the activity of the minus-end directed microtubule motor protein dynein. May enhance dynein-mediated microtubule sliding by targeting dynein to the microtubule plus end. Required for nuclear migration during vegetative growth as well as development. Required for retrograde early endosome (EE) transport from the hyphal tip. Required for localization of dynein to the mitotic spindle poles. Recruits additional proteins to the dynein complex at SPBs. The protein is Nuclear distribution protein PAC1-2 of Podospora anserina (strain S / ATCC MYA-4624 / DSM 980 / FGSC 10383) (Pleurage anserina).